Here is a 213-residue protein sequence, read N- to C-terminus: Imidazole glycerol phosphate synthase subunit HisH (213 aa).

Residues 8 to 213 form the Glutamine amidotransferase type-1 domain; that stretch reads TVALIDYGAG…FLSRFLDWNP (206 aa). Catalysis depends on Cys-91, which acts as the Nucleophile. Catalysis depends on residues His-193 and Glu-195.

Heterodimer of HisH and HisF.

It localises to the cytoplasm. It catalyses the reaction 5-[(5-phospho-1-deoxy-D-ribulos-1-ylimino)methylamino]-1-(5-phospho-beta-D-ribosyl)imidazole-4-carboxamide + L-glutamine = D-erythro-1-(imidazol-4-yl)glycerol 3-phosphate + 5-amino-1-(5-phospho-beta-D-ribosyl)imidazole-4-carboxamide + L-glutamate + H(+). The catalysed reaction is L-glutamine + H2O = L-glutamate + NH4(+). The protein operates within amino-acid biosynthesis; L-histidine biosynthesis; L-histidine from 5-phospho-alpha-D-ribose 1-diphosphate: step 5/9. IGPS catalyzes the conversion of PRFAR and glutamine to IGP, AICAR and glutamate. The HisH subunit catalyzes the hydrolysis of glutamine to glutamate and ammonia as part of the synthesis of IGP and AICAR. The resulting ammonia molecule is channeled to the active site of HisF. This Zymomonas mobilis subsp. mobilis (strain ATCC 31821 / ZM4 / CP4) protein is Imidazole glycerol phosphate synthase subunit HisH.